The following is a 285-amino-acid chain: Eukaryotic translation initiation factor 3 subunit F-2 (285 aa).

The MPN domain maps to 11 to 145 (VFIKPLVLFQ…TRLYCAVEIG (135 aa)).

Belongs to the eIF-3 subunit F family. Component of the eukaryotic translation initiation factor 3 (eIF-3) complex. The eIF-3 complex interacts with pix.

The protein resides in the cytoplasm. Its function is as follows. Component of the eukaryotic translation initiation factor 3 (eIF-3) complex, which is involved in protein synthesis of a specialized repertoire of mRNAs and, together with other initiation factors, stimulates binding of mRNA and methionyl-tRNAi to the 40S ribosome. The eIF-3 complex specifically targets and initiates translation of a subset of mRNAs involved in cell proliferation. This chain is Eukaryotic translation initiation factor 3 subunit F-2, found in Drosophila yakuba (Fruit fly).